The chain runs to 240 residues: Ubiquitin domain-containing protein 1 (240 aa).

Residues 1–48 (MGGCVGRPQGESQRSQSRASGQQRKRAGRNEPLKKERPRWKSDYPMTD) are disordered. Over residues 12–22 (SQRSQSRASGQ) the composition is skewed to low complexity. The segment covering 28 to 42 (GRNEPLKKERPRWKS) has biased composition (basic and acidic residues). One can recognise a Ubiquitin-like domain in the interval 153–228 (FQLKVRLSTG…DTSYCKPATR (76 aa)).

In terms of biological role, may be involved in the regulation of cellular senescence through a positive feedback loop with TP53. The sequence is that of Ubiquitin domain-containing protein 1 (ubtd1) from Xenopus tropicalis (Western clawed frog).